A 157-amino-acid polypeptide reads, in one-letter code: 3-hydroxyacyl-[acyl-carrier-protein] dehydratase FabZ (157 aa).

The active site involves histidine 58.

Belongs to the thioester dehydratase family. FabZ subfamily.

The protein resides in the cytoplasm. The enzyme catalyses a (3R)-hydroxyacyl-[ACP] = a (2E)-enoyl-[ACP] + H2O. Functionally, involved in unsaturated fatty acids biosynthesis. Catalyzes the dehydration of short chain beta-hydroxyacyl-ACPs and long chain saturated and unsaturated beta-hydroxyacyl-ACPs. This Rhizobium rhizogenes (strain K84 / ATCC BAA-868) (Agrobacterium radiobacter) protein is 3-hydroxyacyl-[acyl-carrier-protein] dehydratase FabZ.